Reading from the N-terminus, the 350-residue chain is Leucine-rich repeat-containing protein 23 (350 aa).

A compositionally biased stretch (acidic residues) spans 1–54 (MEDETLEDGPEEEEEDEEEGTAEETNQDVTERDEEEEAEKDEEEDKEEEEEAEK). The tract at residues 1-64 (MEDETLEDGP…EEPPPHMPLS (64 aa)) is disordered. 8 LRR repeats span residues 107-128 (HLRY…GALT), 129-150 (HLLS…GELP), 151-171 (YLQV…FGHP), 172-193 (RLET…ECSN), 196-216 (SLHT…LNLP), 217-238 (SLRE…EALV), 239-260 (NLTT…SEHL), and 262-283 (ALQY…QKLY). Residues 296–334 (NPCEEEEGYRMETLIALPQLERLDKDFFEEEEKREAAET) form the LRRCT domain. Positions 314 to 344 (QLERLDKDFFEEEEKREAAETKKAREEEMAE) form a coiled coil. Residues 325-350 (EEEKREAAETKKAREEEMAEPGEKGN) form a disordered region.

Its subcellular location is the cytoplasm. The protein localises to the cytoskeleton. The protein resides in the flagellum axoneme. The protein is Leucine-rich repeat-containing protein 23 (lrrc23) of Xenopus tropicalis (Western clawed frog).